The primary structure comprises 502 residues: Pentatricopeptide repeat-containing protein At4g01990, mitochondrial (502 aa).

The N-terminal 13 residues, 1-13, are a transit peptide targeting the mitochondrion; it reads MMHSVSRLARRFC. 7 PPR repeats span residues 139–173, 174–208, 209–243, 245–275, 280–310, 315–345, and 350–381; these read NQST…NHVS, NSLP…SITP, CDIT…GEGI, SWNT…LENN, VRDC…LKKR, NNSS…WEST, and DMRM…MKKC.

This sequence belongs to the PPR family. P subfamily.

The protein resides in the mitochondrion. The protein is Pentatricopeptide repeat-containing protein At4g01990, mitochondrial of Arabidopsis thaliana (Mouse-ear cress).